Here is a 260-residue protein sequence, read N- to C-terminus: Global transcriptional regulator CodY (260 aa).

The tract at residues 1 to 159 (MPNLLEKTRK…SSTVVGIQLL (159 aa)) is GAF domain. A DNA-binding region (H-T-H motif) is located at residues 207–226 (ASVIADRIGITRSVIVNALR).

This sequence belongs to the CodY family.

It localises to the cytoplasm. Functionally, DNA-binding global transcriptional regulator which is involved in the adaptive response to starvation and acts by directly or indirectly controlling the expression of numerous genes in response to nutrient availability. During rapid exponential growth, CodY is highly active and represses genes whose products allow adaptation to nutrient depletion. This is Global transcriptional regulator CodY from Streptococcus uberis (strain ATCC BAA-854 / 0140J).